The chain runs to 255 residues: MKIGINSDMGEGFGNYRICDDEALMSIVSSANVACGFHAGDPIIMDRMVRLAKQKGVEVGAHPGLPDLLGFGRRVIQMDAAELEKHMVYQIGALQAIAANAGHRVTHVSFHAAMGNMVNADPDMADVVARAIATINRDFIVFSQPDAEIVRAARKVGLRTLTLFLADRAYDENGHLVSRKLPNSVVTSTEAVAERVKRFLDSGTVQTIEGKSIKVEARSILIHSDTPGSVNLAGTVRRVIEQGGGEVTPATVLLN.

This sequence belongs to the LamB/PxpA family. Forms a complex composed of PxpA, PxpB and PxpC.

It catalyses the reaction 5-oxo-L-proline + ATP + 2 H2O = L-glutamate + ADP + phosphate + H(+). Functionally, catalyzes the cleavage of 5-oxoproline to form L-glutamate coupled to the hydrolysis of ATP to ADP and inorganic phosphate. This is 5-oxoprolinase subunit A 1 from Bradyrhizobium diazoefficiens (strain JCM 10833 / BCRC 13528 / IAM 13628 / NBRC 14792 / USDA 110).